A 289-amino-acid chain; its full sequence is MVGVKPVGSDPDFQPELSGAGSRLAVVKFTMRGCGPCLRIAPAFSSMSNKYPQAVFLEVDVHQCQGTAATNNISATPTFLFFRNKVRIDQYQGADAVGLEEKIKQHLENDPGSNEDTDIPKGYMDLMPFINKAGCECLNESDEHGFDNCLRKDLSFLESDCDEQLLITVAFNQPVKLYSMKFQGPDNGQGPKYVKIFINLPRSMDFEEAERSEPTQALELTEDDIKEDGIVPLRYVKFQNVNSVTLFVQSNQGEEETTRISYFTFIGTPVQATNMNDFKRVVGKKGESH.

The Thioredoxin domain occupies 2–109 (VGVKPVGSDP…EEKIKQHLEN (108 aa)). An intrachain disulfide couples Cys34 to Cys37. Position 113 is a phosphoserine (Ser113). Residues 115–285 (EDTDIPKGYM…NDFKRVVGKK (171 aa)) enclose the PITH domain.

Component of the 19S regulatory cap of the 26S proteasome. Interacts with PSMD14/RPN11. Interacts with, and reduces EEF1A1.

It is found in the cytoplasm. Its subcellular location is the nucleus. Its function is as follows. Active thioredoxin with a redox potential of about -250 mV. This Rattus norvegicus (Rat) protein is Thioredoxin-like protein 1 (Txnl1).